Reading from the N-terminus, the 414-residue chain is Serine hydroxymethyltransferase (414 aa).

Residues leucine 118 and 122-124 (GHL) each bind (6S)-5,6,7,8-tetrahydrofolate. An N6-(pyridoxal phosphate)lysine modification is found at lysine 226. 353 to 355 (SPF) lines the (6S)-5,6,7,8-tetrahydrofolate pocket.

This sequence belongs to the SHMT family. In terms of assembly, homodimer. Requires pyridoxal 5'-phosphate as cofactor.

It is found in the cytoplasm. The enzyme catalyses (6R)-5,10-methylene-5,6,7,8-tetrahydrofolate + glycine + H2O = (6S)-5,6,7,8-tetrahydrofolate + L-serine. It functions in the pathway one-carbon metabolism; tetrahydrofolate interconversion. Its pathway is amino-acid biosynthesis; glycine biosynthesis; glycine from L-serine: step 1/1. Its function is as follows. Catalyzes the reversible interconversion of serine and glycine with tetrahydrofolate (THF) serving as the one-carbon carrier. This reaction serves as the major source of one-carbon groups required for the biosynthesis of purines, thymidylate, methionine, and other important biomolecules. Also exhibits THF-independent aldolase activity toward beta-hydroxyamino acids, producing glycine and aldehydes, via a retro-aldol mechanism. The protein is Serine hydroxymethyltransferase of Blochmanniella floridana.